Reading from the N-terminus, the 432-residue chain is Trigger factor (432 aa).

In terms of domain architecture, PPIase FKBP-type spans 161–246 (EDRVTIDFTG…LKKVEERELP (86 aa)).

The protein belongs to the FKBP-type PPIase family. Tig subfamily.

The protein localises to the cytoplasm. The enzyme catalyses [protein]-peptidylproline (omega=180) = [protein]-peptidylproline (omega=0). Functionally, involved in protein export. Acts as a chaperone by maintaining the newly synthesized protein in an open conformation. Functions as a peptidyl-prolyl cis-trans isomerase. This is Trigger factor from Klebsiella pneumoniae subsp. pneumoniae (strain ATCC 700721 / MGH 78578).